A 389-amino-acid polypeptide reads, in one-letter code: Cytochrome b (389 aa).

4 helical membrane passes run 36–56 (MGSLLGLCLVIQICTGIFLAM), 80–102 (WLIRYMHANGASFFFMCMYTHIA), 117–137 (VWTVGVIIFVLTMAAAFLGYC), and 183–203 (FFAFHYLVPFIIAAVVIMHMM). Residues His-86 and His-100 each coordinate heme b. Residues His-187 and His-201 each contribute to the heme b site. His-206 is a binding site for a ubiquinone. Transmembrane regions (helical) follow at residues 229-249 (FVFKDLITVFVFMILFSLFVF), 293-313 (LLGVITMFAAILVLLVLPITD), 325-345 (LSKFFFFIFVFNFVLLGIIGM), and 352-372 (FVLIGQISTGIYFAYFIIIVP).

This sequence belongs to the cytochrome b family. In terms of assembly, fungal cytochrome b-c1 complex contains 10 subunits; 3 respiratory subunits, 2 core proteins and 5 low-molecular weight proteins. Cytochrome b-c1 complex is a homodimer. Requires heme b as cofactor.

The protein resides in the mitochondrion inner membrane. In terms of biological role, component of the ubiquinol-cytochrome c reductase complex (complex III or cytochrome b-c1 complex) that is part of the mitochondrial respiratory chain. The b-c1 complex mediates electron transfer from ubiquinol to cytochrome c. Contributes to the generation of a proton gradient across the mitochondrial membrane that is then used for ATP synthesis. This chain is Cytochrome b (COB), found in Vanderwaltozyma polyspora (strain ATCC 22028 / DSM 70294 / BCRC 21397 / CBS 2163 / NBRC 10782 / NRRL Y-8283 / UCD 57-17) (Kluyveromyces polysporus).